The primary structure comprises 414 residues: Dual-specificity RNA methyltransferase RlmN (414 aa).

A compositionally biased stretch (low complexity) spans 1 to 20; the sequence is MMSTPETATEATAPEAAPAP. The segment at 1 to 24 is disordered; that stretch reads MMSTPETATEATAPEAAPAPSLGA. Glu129 serves as the catalytic Proton acceptor. Positions 135-385 constitute a Radical SAM core domain; sequence ESDRGTLCVS…VRTPRGRDIL (251 aa). A disulfide bridge links Cys142 with Cys388. [4Fe-4S] cluster is bound by residues Cys149, Cys153, and Cys156. S-adenosyl-L-methionine contacts are provided by residues 214–215, Ser246, 268–270, and Asn345; these read GE and SLH. Cys388 acts as the S-methylcysteine intermediate in catalysis.

Belongs to the radical SAM superfamily. RlmN family. [4Fe-4S] cluster is required as a cofactor.

Its subcellular location is the cytoplasm. The enzyme catalyses adenosine(2503) in 23S rRNA + 2 reduced [2Fe-2S]-[ferredoxin] + 2 S-adenosyl-L-methionine = 2-methyladenosine(2503) in 23S rRNA + 5'-deoxyadenosine + L-methionine + 2 oxidized [2Fe-2S]-[ferredoxin] + S-adenosyl-L-homocysteine. It carries out the reaction adenosine(37) in tRNA + 2 reduced [2Fe-2S]-[ferredoxin] + 2 S-adenosyl-L-methionine = 2-methyladenosine(37) in tRNA + 5'-deoxyadenosine + L-methionine + 2 oxidized [2Fe-2S]-[ferredoxin] + S-adenosyl-L-homocysteine. Its function is as follows. Specifically methylates position 2 of adenine 2503 in 23S rRNA and position 2 of adenine 37 in tRNAs. m2A2503 modification seems to play a crucial role in the proofreading step occurring at the peptidyl transferase center and thus would serve to optimize ribosomal fidelity. This chain is Dual-specificity RNA methyltransferase RlmN, found in Xanthobacter autotrophicus (strain ATCC BAA-1158 / Py2).